The following is a 313-amino-acid chain: D-alanine--D-alanine ligase (313 aa).

The region spanning 108-308 (KLVWQQTGVP…YSELVVKVLA (201 aa)) is the ATP-grasp domain. 138–193 (VAKLGLPLFVKPASEGSSVAVLKVKTADALPAALSEAATHDKIVIVEKSIEGGGEY) serves as a coordination point for ATP. Mg(2+)-binding residues include D262, E275, and N277.

Belongs to the D-alanine--D-alanine ligase family. It depends on Mg(2+) as a cofactor. Mn(2+) is required as a cofactor.

The protein resides in the cytoplasm. It catalyses the reaction 2 D-alanine + ATP = D-alanyl-D-alanine + ADP + phosphate + H(+). It participates in cell wall biogenesis; peptidoglycan biosynthesis. Functionally, cell wall formation. The sequence is that of D-alanine--D-alanine ligase from Burkholderia ambifaria (strain ATCC BAA-244 / DSM 16087 / CCUG 44356 / LMG 19182 / AMMD) (Burkholderia cepacia (strain AMMD)).